A 496-amino-acid polypeptide reads, in one-letter code: Glutamyl-tRNA(Gln) amidotransferase subunit A, mitochondrial (496 aa).

Residues Lys75 and Ser162 each act as charge relay system in the active site. Residue Ser186 is the Acyl-ester intermediate of the active site.

Belongs to the amidase family. GatA subfamily. Subunit of the heterotrimeric GatCAB amidotransferase (AdT) complex, composed of A, B and C subunits.

It is found in the mitochondrion. It carries out the reaction L-glutamyl-tRNA(Gln) + L-glutamine + ATP + H2O = L-glutaminyl-tRNA(Gln) + L-glutamate + ADP + phosphate + H(+). Allows the formation of correctly charged Gln-tRNA(Gln) through the transamidation of misacylated Glu-tRNA(Gln) in the mitochondria. The reaction takes place in the presence of glutamine and ATP through an activated gamma-phospho-Glu-tRNA(Gln). The polypeptide is Glutamyl-tRNA(Gln) amidotransferase subunit A, mitochondrial (Pediculus humanus subsp. corporis (Body louse)).